A 631-amino-acid polypeptide reads, in one-letter code: Dolichyl-diphosphooligosaccharide--protein glycosyltransferase subunit 2 (631 aa).

An N-terminal signal peptide occupies residues 1 to 22 (MAPPGSSAVFLLALTITASVQA). Residues 23–540 (LTPTHYLTKQ…REPEKRPPTV (518 aa)) lie on the Lumenal side of the membrane. An N-linked (GlcNAc...) asparagine glycan is attached at N106. A Glycyl lysine isopeptide (Lys-Gly) (interchain with G-Cter in ubiquitin) cross-link involves residue K154. The helical transmembrane segment at 541-561 (VSNTFTALILSPLLLLFALWI) threads the bilayer. Residues 562 to 571 (RIGANVSNFT) are Cytoplasmic-facing. A helical transmembrane segment spans residues 572 to 592 (FAPSTVIFHLGHAAMLGLMYI). At 593 to 596 (YWTQ) the chain is on the lumenal side. A helical membrane pass occupies residues 597-617 (LNMFQTLKYLAVLGTVTFLAG). Over 618 to 631 (NRMLAQHAVKRTAH) the chain is Cytoplasmic.

Belongs to the SWP1 family. Component of the oligosaccharyltransferase (OST) complex. OST exists in two different complex forms which contain common core subunits RPN1, RPN2, OST48, OST4, DAD1 and TMEM258, either STT3A or STT3B as catalytic subunits, and form-specific accessory subunits. STT3A complex assembly occurs through the formation of 3 subcomplexes. Subcomplex 1 contains RPN1 and TMEM258, subcomplex 2 contains the STT3A-specific subunits STT3A, DC2/OSTC, and KCP2 as well as the core subunit OST4, and subcomplex 3 contains RPN2, DAD1, and OST48. The STT3A complex can form stable complexes with the Sec61 complex or with both the Sec61 and TRAP complexes. Interacts with DDI2. Interacts with TMEM35A/NACHO.

Its subcellular location is the endoplasmic reticulum. The protein resides in the endoplasmic reticulum membrane. Its pathway is protein modification; protein glycosylation. In terms of biological role, subunit of the oligosaccharyl transferase (OST) complex that catalyzes the initial transfer of a defined glycan (Glc(3)Man(9)GlcNAc(2) in eukaryotes) from the lipid carrier dolichol-pyrophosphate to an asparagine residue within an Asn-X-Ser/Thr consensus motif in nascent polypeptide chains, the first step in protein N-glycosylation. N-glycosylation occurs cotranslationally and the complex associates with the Sec61 complex at the channel-forming translocon complex that mediates protein translocation across the endoplasmic reticulum (ER). All subunits are required for a maximal enzyme activity. The polypeptide is Dolichyl-diphosphooligosaccharide--protein glycosyltransferase subunit 2 (Mus musculus (Mouse)).